The following is a 129-amino-acid chain: Fluoride-specific ion channel FluC (129 aa).

Transmembrane regions (helical) follow at residues 4-24 (LFVAAGGALGSTLRYWLSGLI), 32-52 (FPWGTLVINISGSIVIGAFAT), 69-89 (FFMVGVCGGYTTFSSFSLQTL), and 105-125 (VLSVVFCLIGVWLGHVGAVLI). Na(+) contacts are provided by glycine 76 and threonine 79.

This sequence belongs to the fluoride channel Fluc/FEX (TC 1.A.43) family.

It is found in the cell inner membrane. It carries out the reaction fluoride(in) = fluoride(out). Its activity is regulated as follows. Na(+) is not transported, but it plays an essential structural role and its presence is essential for fluoride channel function. Its function is as follows. Fluoride-specific ion channel. Important for reducing fluoride concentration in the cell, thus reducing its toxicity. In Rhodospirillum rubrum (strain ATCC 11170 / ATH 1.1.1 / DSM 467 / LMG 4362 / NCIMB 8255 / S1), this protein is Fluoride-specific ion channel FluC.